A 59-amino-acid chain; its full sequence is Large ribosomal subunit protein uL30 (59 aa).

The protein belongs to the universal ribosomal protein uL30 family. In terms of assembly, part of the 50S ribosomal subunit.

In Clostridium botulinum (strain Alaska E43 / Type E3), this protein is Large ribosomal subunit protein uL30.